A 329-amino-acid chain; its full sequence is Serine dehydratase-like (329 aa).

M1 is modified (N-acetylmethionine). K48 is subject to N6-(pyridoxal phosphate)lysine.

It belongs to the serine/threonine dehydratase family. As to quaternary structure, monomer. Homodimer. Pyridoxal 5'-phosphate serves as cofactor. As to expression, abundantly expressed in liver.

The enzyme catalyses L-serine = pyruvate + NH4(+). It catalyses the reaction L-threonine = 2-oxobutanoate + NH4(+). It carries out the reaction L-glutamate = D-glutamate. Its function is as follows. Catalyzes the pyridoxal-phosphate-dependent dehydrative deamination of L-threonine and L-serine to ammonia and alpha-ketobutyrate and pyruvate, respectively. Also exhibits racemase activity towards L-glutamate and D-glutamate. The polypeptide is Serine dehydratase-like (Sdsl) (Mus musculus (Mouse)).